Here is a 224-residue protein sequence, read N- to C-terminus: LexA repressor (224 aa).

Positions Arg31 to Gln51 form a DNA-binding region, H-T-H motif. Catalysis depends on for autocatalytic cleavage activity residues Ser142 and Lys179.

This sequence belongs to the peptidase S24 family. In terms of assembly, homodimer.

The enzyme catalyses Hydrolysis of Ala-|-Gly bond in repressor LexA.. In terms of biological role, represses a number of genes involved in the response to DNA damage (SOS response), including recA and lexA. In the presence of single-stranded DNA, RecA interacts with LexA causing an autocatalytic cleavage which disrupts the DNA-binding part of LexA, leading to derepression of the SOS regulon and eventually DNA repair. In Verminephrobacter eiseniae (strain EF01-2), this protein is LexA repressor.